The sequence spans 209 residues: MENNMVMVHEIPFPPEIKTTKPLSLLGYGITDMEIHFLQVKFTAIGVYLDSDVVKHLQQWKGKKGNELAEDDDFFDALISAPVEKYLRIVVIKEIKGSQYGVQLESSVRDRLAAEDMYEEEEEAALEKIVEFLQSKYFKKDTLITFHFPATSPTAEIVVTLEGKEESKLKVENKNVVDMIKKWYLGGTSGVSPSTISSLADNLSAELSK.

It belongs to the chalcone isomerase family. Component an active demethylxanthohumol (DMX) biosynthetic metabolon in glandular trichomes (lupulin glands) that encompasses a chalcone synthase (CHS) and a membrane-bound prenyltransferase. Interacts with CHS_H1 and PT1L. As to expression, mostly expressed in glandular trichomes (lupulin glands), and, to a lower extent, in cones, cones bracts, leaves, stems and roots.

Its subcellular location is the cytoplasm. It carries out the reaction a chalcone = a flavanone.. The protein operates within secondary metabolite biosynthesis; flavonoid biosynthesis. Involved in the biosynthesis of prenylated phenolics natural products which contribute to the bitter taste of beer and display broad biological activities. Involved in anthocyanin biosynthesis. Polyketide binding proteins (PBP) which promotes the catalytic activities of CHS_H1 and PT1L and triggers demethylxanthohumol (DMX) production. The polypeptide is Chalcone isomerase-like protein 2 (Humulus lupulus (European hop)).